The primary structure comprises 343 residues: 4-hydroxy-3-methylbut-2-enyl diphosphate reductase (343 aa).

C18 is a [4Fe-4S] cluster binding site. Positions 47 and 83 each coordinate (2E)-4-hydroxy-3-methylbut-2-enyl diphosphate. Residues H47 and H83 each coordinate dimethylallyl diphosphate. 2 residues coordinate isopentenyl diphosphate: H47 and H83. Residue C105 coordinates [4Fe-4S] cluster. H133 is a (2E)-4-hydroxy-3-methylbut-2-enyl diphosphate binding site. H133 provides a ligand contact to dimethylallyl diphosphate. Isopentenyl diphosphate is bound at residue H133. E135 (proton donor) is an active-site residue. (2E)-4-hydroxy-3-methylbut-2-enyl diphosphate is bound at residue T174. Position 204 (C204) interacts with [4Fe-4S] cluster. 4 residues coordinate (2E)-4-hydroxy-3-methylbut-2-enyl diphosphate: S232, S233, N234, and S277. Residues S232, S233, N234, and S277 each coordinate dimethylallyl diphosphate. The isopentenyl diphosphate site is built by S232, S233, N234, and S277.

It belongs to the IspH family. Requires [4Fe-4S] cluster as cofactor.

The enzyme catalyses isopentenyl diphosphate + 2 oxidized [2Fe-2S]-[ferredoxin] + H2O = (2E)-4-hydroxy-3-methylbut-2-enyl diphosphate + 2 reduced [2Fe-2S]-[ferredoxin] + 2 H(+). It catalyses the reaction dimethylallyl diphosphate + 2 oxidized [2Fe-2S]-[ferredoxin] + H2O = (2E)-4-hydroxy-3-methylbut-2-enyl diphosphate + 2 reduced [2Fe-2S]-[ferredoxin] + 2 H(+). Its pathway is isoprenoid biosynthesis; dimethylallyl diphosphate biosynthesis; dimethylallyl diphosphate from (2E)-4-hydroxy-3-methylbutenyl diphosphate: step 1/1. It functions in the pathway isoprenoid biosynthesis; isopentenyl diphosphate biosynthesis via DXP pathway; isopentenyl diphosphate from 1-deoxy-D-xylulose 5-phosphate: step 6/6. In terms of biological role, catalyzes the conversion of 1-hydroxy-2-methyl-2-(E)-butenyl 4-diphosphate (HMBPP) into a mixture of isopentenyl diphosphate (IPP) and dimethylallyl diphosphate (DMAPP). Acts in the terminal step of the DOXP/MEP pathway for isoprenoid precursor biosynthesis. This Bartonella henselae (strain ATCC 49882 / DSM 28221 / CCUG 30454 / Houston 1) (Rochalimaea henselae) protein is 4-hydroxy-3-methylbut-2-enyl diphosphate reductase.